The following is a 177-amino-acid chain: Large ribosomal subunit protein uL10 (177 aa).

This sequence belongs to the universal ribosomal protein uL10 family. Part of the ribosomal stalk of the 50S ribosomal subunit. The N-terminus interacts with L11 and the large rRNA to form the base of the stalk. The C-terminus forms an elongated spine to which L12 dimers bind in a sequential fashion forming a multimeric L10(L12)X complex.

Its function is as follows. Forms part of the ribosomal stalk, playing a central role in the interaction of the ribosome with GTP-bound translation factors. This chain is Large ribosomal subunit protein uL10, found in Kocuria rhizophila (strain ATCC 9341 / DSM 348 / NBRC 103217 / DC2201).